The chain runs to 342 residues: Dihydroorotate dehydrogenase (quinone) (342 aa).

FMN contacts are provided by residues 61–65 (AGLDK) and threonine 85. Lysine 65 is a binding site for substrate. 110 to 114 (NRMGF) provides a ligand contact to substrate. Positions 138 and 171 each coordinate FMN. Asparagine 171 is a binding site for substrate. The active-site Nucleophile is the serine 174. Asparagine 176 is a binding site for substrate. FMN is bound by residues lysine 216 and threonine 244. 245-246 (NT) lines the substrate pocket. FMN is bound by residues glycine 267, glycine 296, and 317 to 318 (YS).

This sequence belongs to the dihydroorotate dehydrogenase family. Type 2 subfamily. Monomer. FMN serves as cofactor.

Its subcellular location is the cell membrane. It carries out the reaction (S)-dihydroorotate + a quinone = orotate + a quinol. It functions in the pathway pyrimidine metabolism; UMP biosynthesis via de novo pathway; orotate from (S)-dihydroorotate (quinone route): step 1/1. Functionally, catalyzes the conversion of dihydroorotate to orotate with quinone as electron acceptor. This chain is Dihydroorotate dehydrogenase (quinone), found in Pseudomonas aeruginosa (strain UCBPP-PA14).